The primary structure comprises 430 residues: Adenylosuccinate synthetase (430 aa).

GTP is bound by residues 12–18 (GDEGKGK) and 40–42 (GHT). D13 acts as the Proton acceptor in catalysis. Mg(2+)-binding residues include D13 and G40. IMP contacts are provided by residues 13 to 16 (DEGK), 38 to 41 (NAGH), T128, R142, Q223, T238, and R302. Residue H41 is the Proton donor of the active site. 298-304 (TTTGRPR) provides a ligand contact to substrate. GTP contacts are provided by residues R304, 330–332 (SID), and 412–414 (SVG).

It belongs to the adenylosuccinate synthetase family. In terms of assembly, homodimer. The cofactor is Mg(2+).

It localises to the cytoplasm. It carries out the reaction IMP + L-aspartate + GTP = N(6)-(1,2-dicarboxyethyl)-AMP + GDP + phosphate + 2 H(+). The protein operates within purine metabolism; AMP biosynthesis via de novo pathway; AMP from IMP: step 1/2. Plays an important role in the de novo pathway of purine nucleotide biosynthesis. Catalyzes the first committed step in the biosynthesis of AMP from IMP. The protein is Adenylosuccinate synthetase of Streptococcus uberis (strain ATCC BAA-854 / 0140J).